A 411-amino-acid polypeptide reads, in one-letter code: Arginine deiminase (411 aa).

Catalysis depends on Cys401, which acts as the Amidino-cysteine intermediate.

The protein belongs to the arginine deiminase family.

It localises to the cytoplasm. It catalyses the reaction L-arginine + H2O = L-citrulline + NH4(+). It functions in the pathway amino-acid degradation; L-arginine degradation via ADI pathway; carbamoyl phosphate from L-arginine: step 1/2. This Streptococcus pyogenes serotype M49 (strain NZ131) protein is Arginine deiminase.